The following is a 172-amino-acid chain: Ribosome maturation factor RimM (172 aa).

Residues 98–171 (PGEYYYHQIV…KVIVELMEGL (74 aa)) enclose the PRC barrel domain.

Belongs to the RimM family. As to quaternary structure, binds ribosomal protein uS19.

Its subcellular location is the cytoplasm. Its function is as follows. An accessory protein needed during the final step in the assembly of 30S ribosomal subunit, possibly for assembly of the head region. Essential for efficient processing of 16S rRNA. May be needed both before and after RbfA during the maturation of 16S rRNA. It has affinity for free ribosomal 30S subunits but not for 70S ribosomes. This Levilactobacillus brevis (strain ATCC 367 / BCRC 12310 / CIP 105137 / JCM 1170 / LMG 11437 / NCIMB 947 / NCTC 947) (Lactobacillus brevis) protein is Ribosome maturation factor RimM.